The following is a 138-amino-acid chain: Translation initiation factor 5A (138 aa).

Lysine 37 bears the Hypusine mark.

Belongs to the eIF-5A family.

It localises to the cytoplasm. Functions by promoting the formation of the first peptide bond. This Thermococcus sibiricus (strain DSM 12597 / MM 739) protein is Translation initiation factor 5A (eIF5A).